The following is a 614-amino-acid chain: Dihydroxy-acid dehydratase (614 aa).

Position 81 (D81) interacts with Mg(2+). C122 contacts [2Fe-2S] cluster. Mg(2+) is bound by residues D123 and K124. K124 is subject to N6-carboxylysine. C195 is a binding site for [2Fe-2S] cluster. Residue E491 participates in Mg(2+) binding. Residue S517 is the Proton acceptor of the active site.

It belongs to the IlvD/Edd family. In terms of assembly, homodimer. [2Fe-2S] cluster serves as cofactor. Mg(2+) is required as a cofactor.

It catalyses the reaction (2R)-2,3-dihydroxy-3-methylbutanoate = 3-methyl-2-oxobutanoate + H2O. It carries out the reaction (2R,3R)-2,3-dihydroxy-3-methylpentanoate = (S)-3-methyl-2-oxopentanoate + H2O. The protein operates within amino-acid biosynthesis; L-isoleucine biosynthesis; L-isoleucine from 2-oxobutanoate: step 3/4. Its pathway is amino-acid biosynthesis; L-valine biosynthesis; L-valine from pyruvate: step 3/4. Its function is as follows. Functions in the biosynthesis of branched-chain amino acids. Catalyzes the dehydration of (2R,3R)-2,3-dihydroxy-3-methylpentanoate (2,3-dihydroxy-3-methylvalerate) into 2-oxo-3-methylpentanoate (2-oxo-3-methylvalerate) and of (2R)-2,3-dihydroxy-3-methylbutanoate (2,3-dihydroxyisovalerate) into 2-oxo-3-methylbutanoate (2-oxoisovalerate), the penultimate precursor to L-isoleucine and L-valine, respectively. This Nitrobacter winogradskyi (strain ATCC 25391 / DSM 10237 / CIP 104748 / NCIMB 11846 / Nb-255) protein is Dihydroxy-acid dehydratase.